A 374-amino-acid polypeptide reads, in one-letter code: 4-hydroxy-3-methylbut-2-en-1-yl diphosphate synthase (flavodoxin) (374 aa).

Residues C270, C273, C305, and E312 each contribute to the [4Fe-4S] cluster site.

Belongs to the IspG family. [4Fe-4S] cluster serves as cofactor.

It catalyses the reaction (2E)-4-hydroxy-3-methylbut-2-enyl diphosphate + oxidized [flavodoxin] + H2O + 2 H(+) = 2-C-methyl-D-erythritol 2,4-cyclic diphosphate + reduced [flavodoxin]. The protein operates within isoprenoid biosynthesis; isopentenyl diphosphate biosynthesis via DXP pathway; isopentenyl diphosphate from 1-deoxy-D-xylulose 5-phosphate: step 5/6. In terms of biological role, converts 2C-methyl-D-erythritol 2,4-cyclodiphosphate (ME-2,4cPP) into 1-hydroxy-2-methyl-2-(E)-butenyl 4-diphosphate. The chain is 4-hydroxy-3-methylbut-2-en-1-yl diphosphate synthase (flavodoxin) from Yersinia enterocolitica serotype O:8 / biotype 1B (strain NCTC 13174 / 8081).